Consider the following 150-residue polypeptide: Cytochrome c oxidase subunit 5A, mitochondrial (150 aa).

A mitochondrion-targeting transit peptide spans methionine 1–tyrosine 41. The short motif at leucine 2–alanine 17 is the SIFI-degron element. An N6-acetyllysine mark is found at lysine 87 and lysine 113. Threonine 141 carries the phosphothreonine modification.

This sequence belongs to the cytochrome c oxidase subunit 5A family. In terms of assembly, component of the cytochrome c oxidase (complex IV, CIV), a multisubunit enzyme composed of 14 subunits. The complex is composed of a catalytic core of 3 subunits MT-CO1, MT-CO2 and MT-CO3, encoded in the mitochondrial DNA, and 11 supernumerary subunits COX4I, COX5A, COX5B, COX6A, COX6B, COX6C, COX7A, COX7B, COX7C, COX8 and NDUFA4, which are encoded in the nuclear genome. The complex exists as a monomer or a dimer and forms supercomplexes (SCs) in the inner mitochondrial membrane with NADH-ubiquinone oxidoreductase (complex I, CI) and ubiquinol-cytochrome c oxidoreductase (cytochrome b-c1 complex, complex III, CIII), resulting in different assemblies (supercomplex SCI(1)III(2)IV(1) and megacomplex MCI(2)III(2)IV(2)). Interacts with AFG1L. Interacts with RAB5IF. Post-translationally, in response to mitochondrial stress, the precursor protein is ubiquitinated by the SIFI complex in the cytoplasm before mitochondrial import, leading to its degradation. Within the SIFI complex, UBR4 initiates ubiquitin chain that are further elongated or branched by KCMF1.

Its subcellular location is the mitochondrion inner membrane. It participates in energy metabolism; oxidative phosphorylation. Its function is as follows. Component of the cytochrome c oxidase, the last enzyme in the mitochondrial electron transport chain which drives oxidative phosphorylation. The respiratory chain contains 3 multisubunit complexes succinate dehydrogenase (complex II, CII), ubiquinol-cytochrome c oxidoreductase (cytochrome b-c1 complex, complex III, CIII) and cytochrome c oxidase (complex IV, CIV), that cooperate to transfer electrons derived from NADH and succinate to molecular oxygen, creating an electrochemical gradient over the inner membrane that drives transmembrane transport and the ATP synthase. Cytochrome c oxidase is the component of the respiratory chain that catalyzes the reduction of oxygen to water. Electrons originating from reduced cytochrome c in the intermembrane space (IMS) are transferred via the dinuclear copper A center (CU(A)) of subunit 2 and heme A of subunit 1 to the active site in subunit 1, a binuclear center (BNC) formed by heme A3 and copper B (CU(B)). The BNC reduces molecular oxygen to 2 water molecules using 4 electrons from cytochrome c in the IMS and 4 protons from the mitochondrial matrix. The sequence is that of Cytochrome c oxidase subunit 5A, mitochondrial (COX5A) from Saimiri sciureus (Common squirrel monkey).